The following is a 419-amino-acid chain: UDP-N-acetylglucosamine 1-carboxyvinyltransferase (419 aa).

22 to 23 contacts phosphoenolpyruvate; it reads KN. Arginine 91 is a binding site for UDP-N-acetyl-alpha-D-glucosamine. Cysteine 115 (proton donor) is an active-site residue. 2-(S-cysteinyl)pyruvic acid O-phosphothioketal is present on cysteine 115. UDP-N-acetyl-alpha-D-glucosamine-binding positions include 120–124, 160–163, aspartate 305, and valine 327; these read RPVDL and KVSV.

This sequence belongs to the EPSP synthase family. MurA subfamily.

It localises to the cytoplasm. The catalysed reaction is phosphoenolpyruvate + UDP-N-acetyl-alpha-D-glucosamine = UDP-N-acetyl-3-O-(1-carboxyvinyl)-alpha-D-glucosamine + phosphate. Its pathway is cell wall biogenesis; peptidoglycan biosynthesis. Its function is as follows. Cell wall formation. Adds enolpyruvyl to UDP-N-acetylglucosamine. The protein is UDP-N-acetylglucosamine 1-carboxyvinyltransferase of Salmonella gallinarum (strain 287/91 / NCTC 13346).